Consider the following 262-residue polypeptide: MIFVLDVGNTNAVLGVFEEGELRQHWRMETDRHKTEDEYGMLVKQLLEHEGLSFEDVKGIIVSSVVPPIMFALERMCEKYFKIKPLVVGPGIKTGLNIKYENPREVGADRIVNAVAGIHLYGSPLIIVDFGTATTYCYINEEKHYMGGVITPGIMISAEALYSRAAKLPRIEITKPSSVVGKNTVSAMQSGILYGYVGQVEGIVKRMKEEARQEPKVIATGGLAKLISEESNVIDIVDPFLTLKGLYMLYERNANLQHEKGE.

6 to 13 (DVGNTNAV) is an ATP binding site. Residues Tyr100 and 107-110 (GADR) contribute to the substrate site. Asp109 functions as the Proton acceptor in the catalytic mechanism. Residue Asp129 coordinates K(+). Residue Thr132 participates in ATP binding. Thr184 serves as a coordination point for substrate.

Belongs to the type III pantothenate kinase family. In terms of assembly, homodimer. It depends on NH4(+) as a cofactor. Requires K(+) as cofactor.

It localises to the cytoplasm. The catalysed reaction is (R)-pantothenate + ATP = (R)-4'-phosphopantothenate + ADP + H(+). The protein operates within cofactor biosynthesis; coenzyme A biosynthesis; CoA from (R)-pantothenate: step 1/5. Catalyzes the phosphorylation of pantothenate (Pan), the first step in CoA biosynthesis. The protein is Type III pantothenate kinase of Bacillus cereus (strain B4264).